We begin with the raw amino-acid sequence, 588 residues long: Ufm1-specific protease (588 aa).

Active-site residues include cysteine 420, aspartate 544, and histidine 546.

It belongs to the peptidase C78 family. In terms of assembly, interacts with odr-4.

It is found in the endoplasmic reticulum membrane. The protein localises to the cytoplasm. Its subcellular location is the perinuclear region. Functionally, thiol protease which recognizes and hydrolyzes the peptide bond at the C-terminal Gly of ufm-1, a ubiquitin-like modifier protein bound to a number of target proteins. Required, with oct-4, for the localization of a subset of 7 transmembrane domain odorant receptors, including odr-10, to the cilia of olfactory neurons AWA and AWC. Operates in aggregation behavior, and responses to oxygen levels. This Caenorhabditis briggsae protein is Ufm1-specific protease.